The following is a 357-amino-acid chain: Arginine kinase (357 aa).

Alanine 2 bears the N-acetylalanine mark. The Phosphagen kinase N-terminal domain occupies 9 to 91 (KLEEGFKKLE…FDPIIEDYHK (83 aa)). An L-arginine-binding site is contributed by 64–68 (GVGVY). Positions 119 to 356 (FVISTRVRCG…LELIKIEKEM (238 aa)) constitute a Phosphagen kinase C-terminal domain. Residues 122–126 (STRVR) and histidine 185 each bind ATP. An L-arginine-binding site is contributed by glutamate 225. Arginine 229 is a binding site for ATP. Cysteine 271 contributes to the L-arginine binding site. ATP is bound by residues 280 to 284 (RASVH) and 309 to 314 (RGTRGE). Residue glutamate 314 coordinates L-arginine.

Belongs to the ATP:guanido phosphotransferase family.

The enzyme catalyses L-arginine + ATP = N(omega)-phospho-L-arginine + ADP + H(+). This is Arginine kinase from Carcinus maenas (Common shore crab).